Consider the following 329-residue polypeptide: Endochitinase A (329 aa).

Positions 1–23 (MRLCKFTALSSLLFSLLLLSASA) are cleaved as a signal peptide. Positions 24–65 (EQCGSQAGGARCPSGLCCSKFGWCGNTNDYCGPGNCQSQCPG) constitute a Chitin-binding type-1 domain. Disulfide bonds link cysteine 26–cysteine 41, cysteine 35–cysteine 47, cysteine 40–cysteine 54, and cysteine 59–cysteine 63. Proline 67 carries the 4-hydroxyproline; partial modification. 4-hydroxyproline occurs at positions 69, 71, 72, and 74. Residue proline 75 is modified to 4-hydroxyproline; partial. Intrachain disulfides connect cysteine 101/cysteine 163, cysteine 175/cysteine 183, and cysteine 282/cysteine 314. Glutamate 145 (proton donor) is an active-site residue. A propeptide spans 323-329 (GLLVDTM) (removed in mature form).

This sequence belongs to the glycosyl hydrolase 19 family. Chitinase class I subfamily. In terms of processing, the 4-hydroxyproline residues are not glycosylated in this plant vacuolar protein.

It localises to the vacuole. The enzyme catalyses Random endo-hydrolysis of N-acetyl-beta-D-glucosaminide (1-&gt;4)-beta-linkages in chitin and chitodextrins.. In terms of biological role, defense against chitin-containing fungal pathogens. This Nicotiana tabacum (Common tobacco) protein is Endochitinase A (CHN48).